Here is a 274-residue protein sequence, read N- to C-terminus: 3-methyl-2-oxobutanoate hydroxymethyltransferase (274 aa).

Positions 49 and 88 each coordinate Mg(2+). Residues 49 to 50, aspartate 88, and lysine 118 contribute to the 3-methyl-2-oxobutanoate site; that span reads DS. A Mg(2+)-binding site is contributed by glutamate 120. Glutamate 187 acts as the Proton acceptor in catalysis.

The protein belongs to the PanB family. Homodecamer; pentamer of dimers. Requires Mg(2+) as cofactor.

The protein resides in the cytoplasm. The enzyme catalyses 3-methyl-2-oxobutanoate + (6R)-5,10-methylene-5,6,7,8-tetrahydrofolate + H2O = 2-dehydropantoate + (6S)-5,6,7,8-tetrahydrofolate. It participates in cofactor biosynthesis; (R)-pantothenate biosynthesis; (R)-pantoate from 3-methyl-2-oxobutanoate: step 1/2. Its function is as follows. Catalyzes the reversible reaction in which hydroxymethyl group from 5,10-methylenetetrahydrofolate is transferred onto alpha-ketoisovalerate to form ketopantoate. The sequence is that of 3-methyl-2-oxobutanoate hydroxymethyltransferase from Allorhizobium ampelinum (strain ATCC BAA-846 / DSM 112012 / S4) (Agrobacterium vitis (strain S4)).